The primary structure comprises 663 residues: UvrABC system protein B (663 aa).

The segment covering 1 to 10 has biased composition (basic and acidic residues); that stretch reads MIDKRDDKPF. Positions 1–23 are disordered; that stretch reads MIDKRDDKPFKLKSKYKPSGDQP. The Helicase ATP-binding domain maps to 31–418; it reads DNIEGGEKAQ…TNTIIEQIIR (388 aa). ATP is bound at residue 44 to 51; sequence GATGTGKT. Positions 97 to 120 match the Beta-hairpin motif; it reads YYDYYQPEAYVPSSDTYIEKDSSV. The region spanning 435 to 601 is the Helicase C-terminal domain; that stretch reads QMDDLLGEIN…TIKKDIRGLI (167 aa). In terms of domain architecture, UVR spans 627–662; it reads KEAINALQKQMQEAAELLDFELAAQMRDLILELKLM.

Belongs to the UvrB family. Forms a heterotetramer with UvrA during the search for lesions. Interacts with UvrC in an incision complex.

It localises to the cytoplasm. The UvrABC repair system catalyzes the recognition and processing of DNA lesions. A damage recognition complex composed of 2 UvrA and 2 UvrB subunits scans DNA for abnormalities. Upon binding of the UvrA(2)B(2) complex to a putative damaged site, the DNA wraps around one UvrB monomer. DNA wrap is dependent on ATP binding by UvrB and probably causes local melting of the DNA helix, facilitating insertion of UvrB beta-hairpin between the DNA strands. Then UvrB probes one DNA strand for the presence of a lesion. If a lesion is found the UvrA subunits dissociate and the UvrB-DNA preincision complex is formed. This complex is subsequently bound by UvrC and the second UvrB is released. If no lesion is found, the DNA wraps around the other UvrB subunit that will check the other stand for damage. This chain is UvrABC system protein B, found in Streptococcus pyogenes serotype M6 (strain ATCC BAA-946 / MGAS10394).